The chain runs to 252 residues: Ureidoacrylate amidohydrolase RutB (252 aa).

Polar residues predominate over residues 1-14 (MSTPARNTTLTSNT). A disordered region spans residues 1-31 (MSTPARNTTLTSNTPAGAPRLPGAPAPQVLP). Residues 15 to 27 (PAGAPRLPGAPAP) are compositionally biased toward low complexity. Asp50 acts as the Proton acceptor in catalysis. Lys159 is an active-site residue. The active-site Nucleophile is Cys192.

The protein belongs to the isochorismatase family. RutB subfamily.

The catalysed reaction is (Z)-3-ureidoacrylate + H2O + H(+) = (Z)-3-aminoacrylate + NH4(+) + CO2. It carries out the reaction (Z)-3-ureidoacrylate + H2O = (Z)-3-aminoacrylate + carbamate + H(+). The enzyme catalyses (Z)-2-methylureidoacrylate + H2O + H(+) = (Z)-2-methylaminoacrylate + NH4(+) + CO2. Functionally, hydrolyzes ureidoacrylate to form aminoacrylate and carbamate. The carbamate hydrolyzes spontaneously, thereby releasing one of the nitrogen atoms of the pyrimidine ring as ammonia and one of its carbon atoms as CO2. The sequence is that of Ureidoacrylate amidohydrolase RutB from Variovorax paradoxus (strain S110).